Consider the following 252-residue polypeptide: MRDRCMLSFTKEQLTSVGEYCTLHSSPLPKSVEEQCRVTDERSQDEVVMAPSPAQCAWLMSFALASRPRRILELGTFTGVSTLAFYEGTRKTKAEIITVDMSEEYLQIAETAFRRHGATDRIQTIRGPCLEILPTITGEFDLIYIDAAEEEYEAYTRFVLDHKLLSAEGVMLVDDGTYIRWFYFFQANWWSVLLEGLVVDRSIVKEFPEEIQEPYLGIADQMNDFNRYARSDPRVEVTMIPLFNGVTQITWK.

S-adenosyl-L-methionine-binding positions include Glu-73, 75–76, Ser-81, and Asp-100; that span reads GT.

Belongs to the class I-like SAM-binding methyltransferase superfamily. Cation-dependent O-methyltransferase family.

It functions in the pathway secondary metabolite biosynthesis. Functionally, O-methyltransferase; part of the gene cluster that mediates the biosynthesis of hancockiamides, an unusual new family of N-cinnamoylated piperazines. The NRPS hkm10 and the NmrA-like reductase hkm9 are proposed to convert two molecules of L-Phe to the intermediary piperazine called xenocockiamide A. Xenocockiamide A is then converted to hancockiamide D via a series of hydroxylations and O-methylations. The tyrosinase hkm6 may catalyze an aromatic hydroxylation, then the 2-oxoglutarate-dependent Fe(II) dioxygenase hkm4 and the FAD-dependent phenol hydroxylase hkm7 may catalyze consecutive hydroxylations to install 2 more hydroxy groups, and the methyltransferase hkm8 probably catalyzes two methylations using 2 molecules of S-adenosyl-L-methionine (SAM). The NRPS hkm11 activates and transfers trans-cinnamate supplied by the PAL hkm12 to hancockiamide D and produces hancockiamide A. NRPS Hkm11 has the flexibility to tolerate the bulky hancockiamide G as a substrate and the absence of the acetyl-transferase hkm3 opens up the opportunity for hkm11 to introduce a second N-cinnamoyl moiety. The cytochrome P450 monooxygenase hkm5 catalyzes the methylenedioxy bridge formation, converting hancockiamide A into hancockiamide G. Hkm5 can also convert hancockiamide B into hancockiamide C, and hancockiamide D into hancockiamide H. The N-acetyltransferase hkm3 finally transfers an acetyl group to 1-N of piperazine, converting hancockiamide A into hancockiamide B and hancockiamide G into hancockiamide C. This chain is O-methyltransferase hkm8, found in Aspergillus hancockii.